The chain runs to 352 residues: Thiosulfate transporter TsuA (352 aa).

The helical transmembrane segment at 1–21 threads the bilayer; the sequence is MFSMILSGLICGALLGFVMQR. The Cytoplasmic segment spans residues 22–44; it reads GRFCLTGGFRDMYIVKNNRMFYA. Residues 45-65 traverse the membrane as a helical segment; the sequence is LLIAISVQSVGVFALIQAGLL. The Periplasmic segment spans residues 66–70; that stretch reads TYEAG. A helical transmembrane segment spans residues 71–91; it reads AFPWLGTVIGGYIFGLGIVLA. Topologically, residues 92-102 are cytoplasmic; the sequence is GGCATGTWYRA. Residues 103-123 form a helical membrane-spanning segment; that stretch reads GEGLIGSWIALFTYMVMSAVM. Topologically, residues 124–148 are periplasmic; it reads RSPHASGLNQTLQHYSTEHNSIAET. The chain crosses the membrane as a helical span at residues 149-169; it reads FNLSVWPLVAVLLVITLWVVM. At 170–197 the chain is on the cytoplasmic side; sequence KELKKPKLKVATLPPRRTGIAHILFEKR. A helical membrane pass occupies residues 198–218; that stretch reads WHPFVTAVLIGLIALLAWPLS. Residues 219–247 are Periplasmic-facing; the sequence is EATGRMFGLGITSPTANILQFLVAGDMKY. Residues 248-268 form a helical membrane-spanning segment; it reads INWGVFLVLGIFVGSFIAAKA. The Cytoplasmic portion of the chain corresponds to 269–289; the sequence is SREFRVRAADAQTTLRSGLGG. A helical membrane pass occupies residues 290–310; it reads VLMGFGASIAGGCSIGNGLVM. Residues 311 to 317 are Periplasmic-facing; sequence TAMMTWQ. Residues 318 to 338 traverse the membrane as a helical segment; the sequence is GWIGLVFMILGVWTASWLVYV. Topologically, residues 339 to 352 are cytoplasmic; it reads RPQRKARLATAAAN.

This sequence belongs to the TsuA/YedE (TC 9.B.102) family.

It is found in the cell inner membrane. It carries out the reaction thiosulfate(in) = thiosulfate(out). Functionally, mediates thiosulfate uptake. The sequence is that of Thiosulfate transporter TsuA from Escherichia coli (strain K12).